We begin with the raw amino-acid sequence, 129 residues long: Fluoride-specific ion channel FluC (129 aa).

3 helical membrane passes run 20 to 40, 67 to 87, and 96 to 116; these read WFLGLMLNAIFLPIPLGTLAA, LLIITGFLGGLTTFSTFTAEI, and IMTAVAAIVLHVCGSLIMMLL. Na(+) contacts are provided by Gly75 and Thr78.

Belongs to the fluoride channel Fluc/FEX (TC 1.A.43) family.

The protein localises to the cell inner membrane. It catalyses the reaction fluoride(in) = fluoride(out). Na(+) is not transported, but it plays an essential structural role and its presence is essential for fluoride channel function. Fluoride-specific ion channel. Important for reducing fluoride concentration in the cell, thus reducing its toxicity. This chain is Fluoride-specific ion channel FluC, found in Desulfovibrio desulfuricans (strain ATCC 27774 / DSM 6949 / MB).